Consider the following 169-residue polypeptide: CRISPR system Cmr subunit Cmr5 (169 aa).

It belongs to the CRISPR system Cmr5 family. In terms of assembly, monomer in isolation. Part of the type III-B Cmr ribonucleoprotein (RNP) complex, an elongated RNP with Cmr2 and Cmr3 as the base, with Cmr4 and Cmr5 forming a helical core along the mature crRNA (39 or 45 nt in length), while the complex is capped by Cmr6 and Cmr1. The 5' end of the crRNA is bound to Cmr2 and Cmr3, while Cmr6 and a Cmr1 subunit (Cmr1-1 or Cmr1-2) cap the 3' end of the crRNA. The target RNA lies antiparallel to the crRNA, with its 5' end near Cmr1 and Cmr6 and its 3' end near Cmr2 and Cmr3; major target cleavage occurs nears the junction of Cmr1/Cmr6 and Cmr4/Cmr, with minor cleavage occurring at 6 nt intervals which coincide with the proposed spacing of Cmr4 subunits. Interacts with Cmr4. Interacts with Cmr2, Cmr4 and Cmr6.

It localises to the cytoplasm. CRISPR (clustered regularly interspaced short palindromic repeat), is an adaptive immune system that provides protection against mobile genetic elements (viruses, transposable elements and conjugative plasmids). CRISPR clusters contain sequences complementary to antecedent mobile elements and target invading nucleic acids. CRISPR clusters are transcribed and processed into CRISPR RNA (crRNA), formerly called psiRNA (prokaryotic silencing) in this organism. Part of the Cmr ribonucleoprotein complex which has divalent cation-dependent endoribonuclease activity specific for ssRNA complementary to the crRNA (target NRA), generating 5' hydroxy- and 3' phosphate or 2'-3' cyclic phosphate termini. Cmr4 is probably the subunit that cleaves target RNA. Cmr complex does not cleave ssDNA complementary to the crRNA. Cleavage of invading RNA is guided by the crRNA; substrate cleavage occurs a fixed distance (14 nt) from the 3' end of the crRNA. In vitro reconstitution shows Cmr1-2 and Cmr5 are not absolutely necessary for target cleavage. In Pyrococcus furiosus (strain ATCC 43587 / DSM 3638 / JCM 8422 / Vc1), this protein is CRISPR system Cmr subunit Cmr5.